A 174-amino-acid polypeptide reads, in one-letter code: Large ribosomal subunit protein uL16 (174 aa).

This sequence belongs to the universal ribosomal protein uL16 family.

This is Large ribosomal subunit protein uL16 from Staphylothermus marinus (strain ATCC 43588 / DSM 3639 / JCM 9404 / F1).